The primary structure comprises 492 residues: Proline--tRNA ligase (492 aa).

It belongs to the class-II aminoacyl-tRNA synthetase family. ProS type 3 subfamily. In terms of assembly, homodimer.

Its subcellular location is the cytoplasm. It catalyses the reaction tRNA(Pro) + L-proline + ATP = L-prolyl-tRNA(Pro) + AMP + diphosphate. Functionally, catalyzes the attachment of proline to tRNA(Pro) in a two-step reaction: proline is first activated by ATP to form Pro-AMP and then transferred to the acceptor end of tRNA(Pro). In Flavobacterium johnsoniae (strain ATCC 17061 / DSM 2064 / JCM 8514 / BCRC 14874 / CCUG 350202 / NBRC 14942 / NCIMB 11054 / UW101) (Cytophaga johnsonae), this protein is Proline--tRNA ligase.